Here is a 179-residue protein sequence, read N- to C-terminus: Large ribosomal subunit protein uL5 (179 aa).

Belongs to the universal ribosomal protein uL5 family. In terms of assembly, part of the 50S ribosomal subunit; part of the 5S rRNA/L5/L18/L25 subcomplex. Contacts the 5S rRNA and the P site tRNA. Forms a bridge to the 30S subunit in the 70S ribosome.

Functionally, this is one of the proteins that bind and probably mediate the attachment of the 5S RNA into the large ribosomal subunit, where it forms part of the central protuberance. In the 70S ribosome it contacts protein S13 of the 30S subunit (bridge B1b), connecting the 2 subunits; this bridge is implicated in subunit movement. Contacts the P site tRNA; the 5S rRNA and some of its associated proteins might help stabilize positioning of ribosome-bound tRNAs. The polypeptide is Large ribosomal subunit protein uL5 (Azotobacter vinelandii (strain DJ / ATCC BAA-1303)).